Here is a 260-residue protein sequence, read N- to C-terminus: Thrombin-like enzyme bhalternin (260 aa).

An N-terminal signal peptide occupies residues 1 to 18 (MVLIRVLANLLILQLSYA). A propeptide spanning residues 19 to 24 (QKASEL) is cleaved from the precursor. Positions 25–251 (VIGGDECNIN…YSEWIQSIIA (227 aa)) constitute a Peptidase S1 domain. Cystine bridges form between Cys31-Cys165, Cys50-Cys66, Cys144-Cys212, Cys176-Cys191, and Cys202-Cys227. A glycan (N-linked (GlcNAc...) asparagine) is linked at Asn44. Asn81 carries an N-linked (GlcNAc...) asparagine glycan.

The protein belongs to the peptidase S1 family. Snake venom subfamily. As to quaternary structure, monomer. As to expression, expressed by the venom gland.

Its subcellular location is the secreted. Its activity is regulated as follows. Inhibited by benzamidine and partially inhibited by EDTA. In terms of biological role, thrombin-like snake venom serine protease that induces blood clotting in vitro, defibrinogenation in vivo (by intraperitoneal injection into mice), albuminolytic and fibrinogenolytic activities. Preferentially cleaves the alpha chain of fibrinogen (FGA). Causes hemolysis in the heart, causes apparent hyperemia and lymphocytic interstitial pneumonitis in the lung, causes necrosis and inflammatory infiltrate in the liver, and causes glomerular congestion in the kidney. Also provokes a drastic myonecrosis. This is Thrombin-like enzyme bhalternin from Bothrops alternatus (Urutu).